A 992-amino-acid chain; its full sequence is Meckelin (992 aa).

An N-terminal signal peptide occupies residues 1–35 (MVMRTRPLAAMAVRSCFSALTGTVYLLLVLCEVSW). Over 36-516 (AQIFSFPFQR…SVKYEMNQGD (481 aa)) the chain is Extracellular. Residues 37–280 (QIFSFPFQRP…FHYVFEGAAG (244 aa)) form a cysteine-rich region. 12 disulfide bridges follow: Cys-49–Cys-62, Cys-65–Cys-78, Cys-80–Cys-97, Cys-100–Cys-114, Cys-117–Cys-127, Cys-129–Cys-150, Cys-153–Cys-170, Cys-173–Cys-184, Cys-186–Cys-197, Cys-237–Cys-246, Cys-253–Cys-268, and Cys-354–Cys-375. Asn-242 is a glycosylation site (N-linked (GlcNAc...) asparagine). A helical transmembrane segment spans residues 517–545 (AFVQTDIALGVLGGLAVLSSLLKTAGWKR). Residues 546 to 555 (RIGSPMIDLQ) lie on the Cytoplasmic side of the membrane. Residues 556–587 (TVMKFLLYYAGDLANVFFIITVGTGLYWLIFF) traverse the membrane as a helical segment. Residues 588–600 (KAQKSVSVLLPMP) lie on the Extracellular side of the membrane. Residues 601–628 (VQEERFVTYVGCAFAMKALQFLHKLISQ) form a helical membrane-spanning segment. Topologically, residues 629–667 (ITIDIFFIDWERPKGKVLKAVEGEGGVRSATVPVSIWRT) are cytoplasmic. Residues 668-676 (YFVANEWNE) constitute an intramembrane region (helical). Residues 668–698 (YFVANEWNEIQTVRKINPLFQVLTTLFFLEV) traverse the membrane as a discontinuously helical segment. An intramembrane segment occupies 677–685 (IQTVRKINP). The segment at residues 686-698 (LFQVLTTLFFLEV) is an intramembrane region (helical). Topologically, residues 699 to 728 (VGFKNLALMDPSSSLSRSLSDYAAPYSRIL) are extracellular. The helical intramembrane region spans 729-754 (RYAVATTIWLVIGIVQVVFFAAFYER). A discontinuously helical transmembrane segment spans residues 729-768 (RYAVATTIWLVIGIVQVVFFAAFYERFIEDKIRQFVDLCS). Residues 755–759 (FIEDK) lie within the membrane without spanning it. The helical intramembrane region spans 760 to 768 (IRQFVDLCS). The Cytoplasmic portion of the chain corresponds to 769–923 (MSNVSVFLLS…SIFYNDESHS (155 aa)). Positions 924-926 (FSS) form an intramembrane region, helical. Residues 924-949 (FSSVLYYGNEATLLIFDLLFFCVVDL) form a discontinuously helical membrane-spanning segment. Residues 927-933 (VLYYGNE) lie within the membrane without spanning it. An intramembrane region (helical) is located at residues 934-949 (ATLLIFDLLFFCVVDL). Residues 950-954 (ACQNF) lie on the Extracellular side of the membrane. A helical membrane pass occupies residues 955 to 982 (VLASFLTYLQQEIFRFIRNTVGQKNLAT). The Cytoplasmic portion of the chain corresponds to 983–992 (KTLVDERFLI).

In terms of assembly, homodimer. Part of the tectonic-like complex (also named B9 complex). Interacts with DNAJB9, DNAJC10 and mutated SFTPC. Interacts with SYNE2 during the early establishment of cell polarity. Interacts (via C-terminus) with FLNA. Interacts with TMEM218. Interacts with WNT5A. Interacts with ROR2.

It localises to the cell membrane. The protein resides in the endoplasmic reticulum membrane. The protein localises to the cytoplasm. Its subcellular location is the cytoskeleton. It is found in the cilium basal body. Part of the tectonic-like complex which is required for tissue-specific ciliogenesis and may regulate ciliary membrane composition. Involved in centrosome migration to the apical cell surface during early ciliogenesis. Required for ciliary structure and function, including a role in regulating length and appropriate number through modulating centrosome duplication. Is a key regulator of stereociliary bundle orientation. Required for epithelial cell branching morphology. Essential for endoplasmic reticulum-associated degradation (ERAD) of surfactant protein C (sftpc). Involved in the negative regulation of canonical Wnt signaling, and activation of the non-canonical cascade stimulated by WNT5A. In non-canonical Wnt signaling, it may act as ROR2 coreceptor. The protein is Meckelin (Tmem67) of Rattus norvegicus (Rat).